The following is a 619-amino-acid chain: Frizzled and smoothened-like protein L (619 aa).

The signal sequence occupies residues 1–24; the sequence is MITNKSKYYFFLILIFINFYLINC. 7 N-linked (GlcNAc...) asparagine glycosylation sites follow: Asn-4, Asn-63, Asn-112, Asn-143, Asn-159, Asn-184, and Asn-203. Residues 25-245 are Extracellular-facing; it reads QEEYPIDQTG…KQWDRLYDLS (221 aa). Residues 31-169 form the FZ domain; it reads DQTGKCEPYI…YSIYDLSLVN (139 aa). 2 disulfides stabilise this stretch: Cys-36–Cys-106 and Cys-48–Cys-99. A helical transmembrane segment spans residues 246–266; sequence NSLSVLSCVGTLFLLFTFNIL. At 267 to 278 the chain is on the cytoplasmic side; the sequence is NKKINRFDRMNS. A helical transmembrane segment spans residues 279-299; sequence LFNGSVFMMSLSGVIILFAGG. Residues 300-321 are Extracellular-facing; the sequence is PRALIKDGGARISVWQDPLCSA. The helical transmembrane segment at 322–342 threads the bilayer; it reads TGFIFQLFSIAAILFWVVMSF. Over 343–358 the chain is Cytoplasmic; that stretch reads ELWYKIKFMTKKLDLK. A helical membrane pass occupies residues 359–379; that stretch reads KYYIPFIIIVSLVFSIIPLAT. The Extracellular segment spans residues 380–402; that stretch reads KNYRMIRGNMHCWVHTTKLQNSL. The chain crosses the membrane as a helical span at residues 403 to 423; the sequence is FWIPLGIAITIGTIFIGLVMF. Residues 424–444 are Cytoplasmic-facing; the sequence is EIHRIVSANSKGGVLKLEIKS. The helical transmembrane segment at 445–465 threads the bilayer; it reads ILNVALIYLTFIYLFAFNFYM. Residues 466-497 lie on the Extracellular side of the membrane; sequence NGQEGVVYGQIESFYQCTLENDASECTIQGPS. Residues 498–518 traverse the membrane as a helical segment; that stretch reads IGSLGFFIFCIRIYGVYCFIL. The Cytoplasmic portion of the chain corresponds to 519–619; it reads QGLNYRAYNI…TLKDIEVSKS (101 aa). Positions 581–605 are disordered; it reads LNIDSAFSKNNESDDEDDYDPYKKS.

It belongs to the G-protein coupled receptor Fz/Smo family.

The protein resides in the membrane. The polypeptide is Frizzled and smoothened-like protein L (fslL) (Dictyostelium discoideum (Social amoeba)).